Reading from the N-terminus, the 383-residue chain is Chorismate synthase (383 aa).

Positions 39 and 45 each coordinate NADP(+). FMN is bound by residues 128-130 (RAS), Gly-291, 306-310 (KPIAT), and Arg-332.

Belongs to the chorismate synthase family. Homotetramer. It depends on FMNH2 as a cofactor.

It catalyses the reaction 5-O-(1-carboxyvinyl)-3-phosphoshikimate = chorismate + phosphate. Its pathway is metabolic intermediate biosynthesis; chorismate biosynthesis; chorismate from D-erythrose 4-phosphate and phosphoenolpyruvate: step 7/7. In terms of biological role, catalyzes the anti-1,4-elimination of the C-3 phosphate and the C-6 proR hydrogen from 5-enolpyruvylshikimate-3-phosphate (EPSP) to yield chorismate, which is the branch point compound that serves as the starting substrate for the three terminal pathways of aromatic amino acid biosynthesis. This reaction introduces a second double bond into the aromatic ring system. In Thermus thermophilus (strain ATCC BAA-163 / DSM 7039 / HB27), this protein is Chorismate synthase.